The chain runs to 316 residues: Ribose-phosphate pyrophosphokinase (316 aa).

ATP-binding positions include 39-41 and 98-99; these read DGE and RQ. Residues His133 and Asp172 each coordinate Mg(2+). Lys195 is an active-site residue. D-ribose 5-phosphate-binding positions include Arg197, Asp221, and 225–229; that span reads DTGGT.

It belongs to the ribose-phosphate pyrophosphokinase family. Class I subfamily. In terms of assembly, homohexamer. It depends on Mg(2+) as a cofactor.

Its subcellular location is the cytoplasm. It catalyses the reaction D-ribose 5-phosphate + ATP = 5-phospho-alpha-D-ribose 1-diphosphate + AMP + H(+). Its pathway is metabolic intermediate biosynthesis; 5-phospho-alpha-D-ribose 1-diphosphate biosynthesis; 5-phospho-alpha-D-ribose 1-diphosphate from D-ribose 5-phosphate (route I): step 1/1. Functionally, involved in the biosynthesis of the central metabolite phospho-alpha-D-ribosyl-1-pyrophosphate (PRPP) via the transfer of pyrophosphoryl group from ATP to 1-hydroxyl of ribose-5-phosphate (Rib-5-P). This is Ribose-phosphate pyrophosphokinase from Ralstonia nicotianae (strain ATCC BAA-1114 / GMI1000) (Ralstonia solanacearum).